Here is a 282-residue protein sequence, read N- to C-terminus: Release factor glutamine methyltransferase (282 aa).

S-adenosyl-L-methionine-binding residues include aspartate 141, phenylalanine 169, and asparagine 186. Position 186–189 (186–189) interacts with substrate; it reads NPPY.

The protein belongs to the protein N5-glutamine methyltransferase family. PrmC subfamily.

The enzyme catalyses L-glutaminyl-[peptide chain release factor] + S-adenosyl-L-methionine = N(5)-methyl-L-glutaminyl-[peptide chain release factor] + S-adenosyl-L-homocysteine + H(+). Its function is as follows. Methylates the class 1 translation termination release factors RF1/PrfA and RF2/PrfB on the glutamine residue of the universally conserved GGQ motif. The chain is Release factor glutamine methyltransferase from Mycoplasma mycoides subsp. mycoides SC (strain CCUG 32753 / NCTC 10114 / PG1).